A 330-amino-acid chain; its full sequence is D-alanine--D-alanine ligase (330 aa).

The ATP-grasp domain occupies 122–323 (NRFLSGFGIR…MKEVLCTIIR (202 aa)). 151–206 (IARMGLPLFVKPNVGGSSIATTKVVEAAQLLPAIEQAFSEGEEVMIERLICGTEVT) contacts ATP. Residues D277, E290, and N292 each coordinate Mg(2+).

It belongs to the D-alanine--D-alanine ligase family. Requires Mg(2+) as cofactor. Mn(2+) is required as a cofactor.

It is found in the cytoplasm. The enzyme catalyses 2 D-alanine + ATP = D-alanyl-D-alanine + ADP + phosphate + H(+). Its pathway is cell wall biogenesis; peptidoglycan biosynthesis. In terms of biological role, cell wall formation. This Porphyromonas gingivalis (strain ATCC BAA-308 / W83) protein is D-alanine--D-alanine ligase.